We begin with the raw amino-acid sequence, 508 residues long: Aldehyde dehydrogenase (508 aa).

Active-site residues include glutamate 264 and cysteine 303.

It belongs to the aldehyde dehydrogenase family.

The catalysed reaction is acetaldehyde + NAD(+) + H2O = acetate + NADH + 2 H(+). The protein operates within organosulfur degradation. In terms of biological role, catalyzes the NAD(+)-dependent oxidation of acetaldehyde to acetate. This is Aldehyde dehydrogenase from Paracoccus denitrificans (strain Pd 1222).